We begin with the raw amino-acid sequence, 469 residues long: uncharacterized protein (469 aa).

Residues 152-161 (VREGKEEKKG) are compositionally biased toward basic and acidic residues. The interval 152–174 (VREGKEEKKGGPPGRGPPGWRRR) is disordered. Coiled coils occupy residues 346–375 (KAAL…RSES) and 423–453 (SDIT…KIKG).

This is an uncharacterized protein from Homo sapiens (Human).